We begin with the raw amino-acid sequence, 574 residues long: Transmembrane glycoprotein NMB (574 aa).

A signal peptide spans Met1–Ala22. At Lys23 to Asn502 the chain is on the extracellular side. 9 N-linked (GlcNAc...) asparagine glycosylation sites follow: Asn93, Asn134, Asn200, Asn249, Asn275, Asn296, Asn300, Asn306, and Asn312. One can recognise a PKD domain in the interval Leu250 to Pro338. Residues Pro320–Pro353 are disordered. Residues Gly321–Leu345 are compositionally biased toward pro residues. 2 N-linked (GlcNAc...) asparagine glycosylation sites follow: Asn463 and Asn471. Residues Gly503–Tyr523 form a helical membrane-spanning segment. The Cytoplasmic portion of the chain corresponds to Lys524 to Leu574. Ser546 carries the phosphoserine modification. The Cell attachment site signature appears at Arg558–Asp560.

This sequence belongs to the PMEL/NMB family. May be up-regulated in bone metastatic breast cancer cells.

Its subcellular location is the cell membrane. The protein localises to the melanosome membrane. It localises to the early endosome membrane. Functionally, could be a melanogenic enzyme. The polypeptide is Transmembrane glycoprotein NMB (Gpnmb) (Mus musculus (Mouse)).